The primary structure comprises 566 residues: Mucin-21 (566 aa).

The N-terminal stretch at 1-24 is a signal peptide; it reads MKMQKGNVLLMFGLLLHLEAATNS. Asn25 is a glycosylation site (N-linked (GlcNAc...) asparagine). Residues 25–68 form a disordered region; it reads NETSTSANTGSSVISSGASTATNSGSSVTSSGVSTATISGSSVT. Residues 25 to 479 lie on the Extracellular side of the membrane; the sequence is NETSTSANTG…KPGGSLVPWE (455 aa). 28 consecutive repeat copies span residues 31-44, 45-59, 60-74, 75-89, 90-104, 105-119, 120-134, 135-149, 150-164, 165-179, 180-194, 195-209, 210-224, 225-239, 244-254, 255-269, 270-284, 285-299, 300-314, 315-329, 330-344, 345-359, 360-374, 375-389, 390-404, 405-419, 420-434, and 435-449. The 28 X 15 AA approximate tandem repeats stretch occupies residues 31–435; sequence ANTGSSVISS…STTSSGANTA (405 aa). Positions 106–456 are disordered; sequence TNSESSTTSS…SGTAALTGMH (351 aa). A helical membrane pass occupies residues 480 to 500; it reads IFLITLVSVVAAVGLFAGLFF. Topologically, residues 501 to 566 are cytoplasmic; that stretch reads CVRNSLSLRN…MEMSGRNSGP (66 aa). Residues 521 to 566 are cytoplasmic tail; the sequence is GLNHGLGPGPGGNHGAPHRPRWSPNWFWRRPVSSIAMEMSGRNSGP.

Post-translationally, O-glycosylated. As to expression, expressed in lung, large intestine, thymus, and testis. Expressed in normal and malignant bronchial epithelial cells.

It localises to the cell membrane. This Homo sapiens (Human) protein is Mucin-21 (MUC21).